The primary structure comprises 533 residues: D-3-phosphoglycerate dehydrogenase (533 aa).

Alanine 2 carries the N-acetylalanine modification. At serine 14 the chain carries Phosphoserine. Lysine 21 bears the N6-acetyllysine; alternate mark. Residue lysine 21 forms a Glycyl lysine isopeptide (Lys-Gly) (interchain with G-Cter in SUMO1); alternate linkage. Lysine 21 participates in a covalent cross-link: Glycyl lysine isopeptide (Lys-Gly) (interchain with G-Cter in SUMO2); alternate. Residue lysine 58 is modified to N6-acetyllysine. Residues threonine 78, 155–156, aspartate 175, threonine 207, 234–236, and aspartate 260 contribute to the NAD(+) site; these read RI and CAR. Threonine 78 carries the phosphothreonine modification. The active site involves arginine 236. The active site involves glutamate 265. Histidine 283 serves as the catalytic Proton donor. An NAD(+)-binding site is contributed by 283-286; it reads HLGA.

The protein belongs to the D-isomer specific 2-hydroxyacid dehydrogenase family. Homotetramer.

The enzyme catalyses (2R)-3-phosphoglycerate + NAD(+) = 3-phosphooxypyruvate + NADH + H(+). It carries out the reaction (R)-2-hydroxyglutarate + NAD(+) = 2-oxoglutarate + NADH + H(+). The catalysed reaction is (S)-malate + NAD(+) = oxaloacetate + NADH + H(+). The protein operates within amino-acid biosynthesis; L-serine biosynthesis; L-serine from 3-phospho-D-glycerate: step 1/3. Its function is as follows. Catalyzes the reversible oxidation of 3-phospho-D-glycerate to 3-phosphonooxypyruvate, the first step of the phosphorylated L-serine biosynthesis pathway. Also catalyzes the reversible oxidation of 2-hydroxyglutarate to 2-oxoglutarate and the reversible oxidation of (S)-malate to oxaloacetate. This Pongo abelii (Sumatran orangutan) protein is D-3-phosphoglycerate dehydrogenase (PHGDH).